A 635-amino-acid polypeptide reads, in one-letter code: Chaperone protein DnaK (635 aa).

The residue at position 198 (Thr198) is a Phosphothreonine; by autocatalysis. Residues 606-635 form a disordered region; the sequence is QATAASPGAEAPKADDDVVDAEFSEVDENK. Residues 622 to 635 show a composition bias toward acidic residues; sequence DVVDAEFSEVDENK.

Belongs to the heat shock protein 70 family.

Functionally, acts as a chaperone. This is Chaperone protein DnaK from Novosphingobium aromaticivorans (strain ATCC 700278 / DSM 12444 / CCUG 56034 / CIP 105152 / NBRC 16084 / F199).